Consider the following 176-residue polypeptide: Xanthine-guanine phosphoribosyltransferase (176 aa).

5-phospho-alpha-D-ribose 1-diphosphate-binding positions include 51 to 52, Arg-88, and 111 to 119; these read RG and DDLVDSGKT. Arg-88 contributes to the GMP binding site. Residue Asp-112 coordinates Mg(2+). Asp-115 and Ile-158 together coordinate guanine. Residues Asp-115 and Ile-158 each contribute to the xanthine site. Residues 115-119 and 157-158 each bind GMP; these read DSGKT and WI.

Belongs to the purine/pyrimidine phosphoribosyltransferase family. XGPT subfamily. As to quaternary structure, homotetramer. The cofactor is Mg(2+).

The protein localises to the cell inner membrane. The enzyme catalyses GMP + diphosphate = guanine + 5-phospho-alpha-D-ribose 1-diphosphate. The catalysed reaction is XMP + diphosphate = xanthine + 5-phospho-alpha-D-ribose 1-diphosphate. It catalyses the reaction IMP + diphosphate = hypoxanthine + 5-phospho-alpha-D-ribose 1-diphosphate. The protein operates within purine metabolism; GMP biosynthesis via salvage pathway; GMP from guanine: step 1/1. Its pathway is purine metabolism; XMP biosynthesis via salvage pathway; XMP from xanthine: step 1/1. Functionally, purine salvage pathway enzyme that catalyzes the transfer of the ribosyl-5-phosphate group from 5-phospho-alpha-D-ribose 1-diphosphate (PRPP) to the N9 position of the 6-oxopurines guanine and xanthine to form the corresponding ribonucleotides GMP (guanosine 5'-monophosphate) and XMP (xanthosine 5'-monophosphate), with the release of PPi. To a lesser extent, also acts on hypoxanthine. The polypeptide is Xanthine-guanine phosphoribosyltransferase (Ruegeria sp. (strain TM1040) (Silicibacter sp.)).